The chain runs to 218 residues: Octanoyltransferase (218 aa).

The region spanning 45-218 is the BPL/LPL catalytic domain; that stretch reads AGTADELWLL…TDALQRAIYS (174 aa). Substrate-binding positions include 84 to 91, 151 to 153, and 164 to 166; these read RGGQITYH, ALG, and GLA. The active-site Acyl-thioester intermediate is Cys-182.

Belongs to the LipB family.

Its subcellular location is the cytoplasm. The catalysed reaction is octanoyl-[ACP] + L-lysyl-[protein] = N(6)-octanoyl-L-lysyl-[protein] + holo-[ACP] + H(+). The protein operates within protein modification; protein lipoylation via endogenous pathway; protein N(6)-(lipoyl)lysine from octanoyl-[acyl-carrier-protein]: step 1/2. Its function is as follows. Catalyzes the transfer of endogenously produced octanoic acid from octanoyl-acyl-carrier-protein onto the lipoyl domains of lipoate-dependent enzymes. Lipoyl-ACP can also act as a substrate although octanoyl-ACP is likely to be the physiological substrate. This chain is Octanoyltransferase, found in Thiobacillus denitrificans (strain ATCC 25259 / T1).